Here is a 1181-residue protein sequence, read N- to C-terminus: Putative primase (1181 aa).

The disordered stretch occupies residues 1141–1181 (RSHSTMVEHDMDDDESTNKKQELEEEDEECIDIDEYNNERF). The segment covering 1163 to 1181 (LEEEDEECIDIDEYNNERF) has biased composition (acidic residues).

The protein belongs to the eukaryotic-type primase small subunit family.

In terms of biological role, synthesizes small RNA primers for the Okazaki fragments on both template strands at replication forks during viral DNA synthesis. This Magallana gigas (Pacific oyster) protein is Putative primase.